Reading from the N-terminus, the 1349-residue chain is ABC multidrug transporter mdr1 (1349 aa).

The interval 1–62 (MPAPETGASS…PDGKQKDHGK (62 aa)) is disordered. The span at 35–45 (DNEKPHDHHSL) shows a compositional bias: basic and acidic residues. The next 4 helical transmembrane spans lie at 108–128 (ILIILVSAICAIAAGAALPLF), 162–182 (YFVYLGIAEFVTVYVSTVGFI), 234–254 (KVGLTLTAFATFVTAFIVAYV), and 257–277 (WKLALICTSTIVALVMVMGGG). One can recognise an ABC transmembrane type-1 1 domain in the interval 112–402 (LVSAICAIAA…VAPNGQAFTN (291 aa)). N-linked (GlcNAc...) asparagine glycosylation occurs at Asn-308. Helical transmembrane passes span 339–359 (ILGMMIGGMFGIMFSNYGLGF) and 371–391 (VNVGQVLTVLMSILIGSFSLG). The region spanning 437–682 (IEFRNVKHIY…KGTYYKLVEA (246 aa)) is the ABC transporter 1 domain. 472 to 479 (GPSGSGKS) serves as a coordination point for ATP. 2 helical membrane-spanning segments follow: residues 779–799 (MLIGLTFSFLAGGGQPTQAFL) and 828–848 (FFVVGIAQFISLSINGTAFAI). One can recognise an ABC transmembrane type-1 2 domain in the interval 780-1069 (LIGLTFSFLA…VFSFAPDMGK (290 aa)). Residues Asn-878 and Asn-893 are each glycosylated (N-linked (GlcNAc...) asparagine). The next 4 membrane-spanning stretches (helical) occupy residues 896–916 (GVSGVTLGTIIMTSTTLGAAM), 926–948 (LALVCISVVPILLACGFLRFYML), 1016–1036 (ALVFFCVALGFWYGGTLLGHH), and 1043–1063 (FFVCFSEILFGAQSAGTVFSF). An ABC transporter 2 domain is found at 1104 to 1342 (IEFRDVHFRY…KGRYYELVNL (239 aa)). Asn-1126 carries N-linked (GlcNAc...) asparagine glycosylation. 1139–1146 (GPSGCGKS) contacts ATP.

The protein belongs to the ABC transporter superfamily. ABCB family. Multidrug resistance exporter (TC 3.A.1.201) subfamily.

The protein localises to the cell membrane. It carries out the reaction voriconazole(in) + ATP + H2O = voriconazole(out) + ADP + phosphate + H(+). Pleiotropic ABC efflux transporter that may be involved in A.fumigatus adaptation to azoles such as vorizonazole. In Aspergillus fumigatus (strain ATCC MYA-4609 / CBS 101355 / FGSC A1100 / Af293) (Neosartorya fumigata), this protein is ABC multidrug transporter mdr1.